The primary structure comprises 610 residues: MTDCFDSKEFLKTVTSQPGVYRMYDKAGTVIYVGKAKDLKKRLTSYFRAHVASRKTETLVKNIAQIDVTVTHTETEALLLEHNYIKLYQPRYNVLLRDDKSYPLIFLSADKHPRLAIHRGAKHEKGEYFGPFPNSYAVRETLALLQKLFPVRQCENSVYRNRSRPCLQYQIGRCSGPCVPGLVSEEEYQRQVDYVRLFLSGKDQQVLTQLISRMEEASRLLHFEDAARIRDQIQAVRRVTEQQFVSGDSEDLDVIGVAFDAGLACVHVLFIRQGKVLGSRSYFPKVPAGTELSEVVQTFVGQFYLQGSQVRTLPGEILLDFTLAEKDLLASSLSELAGRKIQIQSRPRGDRARYLKLARTNASTALVTRLSQQSTIHQRMKELAKILNLDEINRMECFDISHTMGEQTVASCVVFDANGPVRSEYRRYNISGITPGDDYAAMSQVLKRRYGKALDDKKIPDVIFIDGGKGQLSQAFDVFASLNVPWDKQKPLLVGVAKGSDRKAGLETLFLAAEGEGFSLPPDSPALHLIQHIRDDSHHHAITGHRQRRSKVKNTSALELIEGVGPKRRQILLKYMGGLQPLLNASVEEIAKVPSISQALAEKIYNALKH.

The GIY-YIG domain maps to 16–94; it reads SQPGVYRMYD…IKLYQPRYNV (79 aa). Residues 204-239 form the UVR domain; it reads QQVLTQLISRMEEASRLLHFEDAARIRDQIQAVRRV.

This sequence belongs to the UvrC family. As to quaternary structure, interacts with UvrB in an incision complex.

The protein resides in the cytoplasm. Functionally, the UvrABC repair system catalyzes the recognition and processing of DNA lesions. UvrC both incises the 5' and 3' sides of the lesion. The N-terminal half is responsible for the 3' incision and the C-terminal half is responsible for the 5' incision. This chain is UvrABC system protein C, found in Yersinia enterocolitica serotype O:8 / biotype 1B (strain NCTC 13174 / 8081).